The primary structure comprises 146 residues: Protein ADM2 (146 aa).

The signal sequence occupies residues 1 to 25 (MAQLLMVTVTFGCISLLYLLPGTLS). The propeptide occupies 26–96 (GSLGKGLRPR…HPGPQRHVGS (71 aa)). The disordered stretch occupies residues 29–99 (GKGLRPREPP…PQRHVGSRRP (71 aa)). Cys-108 and Cys-113 are disulfide-bonded. Tyr-145 bears the Tyrosine amide mark.

This sequence belongs to the adrenomedullin family. Expression was restricted to the intermediate and anterior lobes of the pituitary.

The protein resides in the secreted. In terms of biological role, intermedin/ADM2 is a peptide hormone that plays a role as physiological regulator of gastrointestinal and cardiovascular bioactivities mediated by the CALCRL-RAMPs receptor complexes. Activates the cAMP-dependent pathway through interaction with CALCRL-RAMP3 receptor complex. The chain is Protein ADM2 from Rattus norvegicus (Rat).